The sequence spans 109 residues: Parvalbumin-7 (109 aa).

N-acetylalanine is present on alanine 2. EF-hand domains follow at residues 39–74 (LSAD…FSAD) and 78–109 (LTDK…LVHE). Aspartate 52, aspartate 54, serine 56, phenylalanine 58, glutamate 60, glutamate 63, aspartate 91, aspartate 93, aspartate 95, lysine 97, and glutamate 102 together coordinate Ca(2+).

The protein belongs to the parvalbumin family.

Its function is as follows. In muscle, parvalbumin is thought to be involved in relaxation after contraction. It binds two calcium ions. In Danio rerio (Zebrafish), this protein is Parvalbumin-7 (pvalb7).